Here is a 570-residue protein sequence, read N- to C-terminus: MSMFCYQCQEAAGGRGCTVKGVCGKTEDIAKTQDLIIYVVKGIAIYSSQAREIGLNTSEADKFIVESLFSTITNANFDAKTLNARVQEGLKIKQSLKDAIIKAGGSYNSKENKSWTSKFLSVLGIKNDKDEKEIHDAAVWAANNPEDFKKKAETVGVLATENEDIRSLRELLTYGLKGMAAYLEHANNLGYDEDSIHAFMEKALVATLDDTLSADELTALVLECGKYGVDVMALLDKANTSTYGNPEITKVNIGVRNNPGILISGHDLKDMEELLKQTEGTGVDVYTHSEMLPANYYPAFKKYKHFVGNYGNAWWKQNEEFEDFNGPILMTTNCIVTPKASYKDRIYTTGVTGFEGVKHINPSKDGKKDFSEIIEHAKRCASPKEIEKGEIIGGFAHNQVLALAPQVVDAVKTGAIKRFFVMAGCDGRMKSRNYYTDFAKELPKDTVILTAGCAKYKYNKLDLGDINGIPRVLDAGQCNDSYSLAVIALKLKEVFELEDINELPISYNIAWYEQKAVIVLLALLHLGVKNIHLGPTLPAFLSPNVAKILVENFGIGTISSVDEDIKMFMN.

Positions 5, 8, 17, and 23 each coordinate [4Fe-4S] cluster. The hybrid [4Fe-2O-2S] cluster site is built by histidine 266, glutamate 290, cysteine 334, cysteine 425, cysteine 453, cysteine 478, glutamate 513, and lysine 515. Cysteine 425 is modified (cysteine persulfide).

Belongs to the HCP family. Requires [4Fe-4S] cluster as cofactor. Hybrid [4Fe-2O-2S] cluster serves as cofactor.

It is found in the cytoplasm. It catalyses the reaction A + NH4(+) + H2O = hydroxylamine + AH2 + H(+). Catalyzes the reduction of hydroxylamine to form NH(3) and H(2)O. The protein is Hydroxylamine reductase of Clostridium botulinum (strain Loch Maree / Type A3).